Here is a 443-residue protein sequence, read N- to C-terminus: Histidinol dehydrogenase (443 aa).

The NAD(+) site is built by Tyr133, Gln191, and Asn214. Residues Ser240, Gln262, and His265 each coordinate substrate. Zn(2+)-binding residues include Gln262 and His265. Active-site proton acceptor residues include Glu329 and His330. Residues His330, Asp363, Glu417, and His422 each coordinate substrate. Position 363 (Asp363) interacts with Zn(2+). Residue His422 coordinates Zn(2+).

The protein belongs to the histidinol dehydrogenase family. Homodimer. Requires Zn(2+) as cofactor.

It carries out the reaction L-histidinol + 2 NAD(+) + H2O = L-histidine + 2 NADH + 3 H(+). Its pathway is amino-acid biosynthesis; L-histidine biosynthesis; L-histidine from 5-phospho-alpha-D-ribose 1-diphosphate: step 9/9. In terms of biological role, catalyzes the sequential NAD-dependent oxidations of L-histidinol to L-histidinaldehyde and then to L-histidine. The polypeptide is Histidinol dehydrogenase (Blochmanniella pennsylvanica (strain BPEN)).